Reading from the N-terminus, the 82-residue chain is ATP synthase subunit c, chloroplastic (82 aa).

The next 2 membrane-spanning stretches (helical) occupy residues 4 to 24 (IISA…AIGP) and 57 to 77 (LAFM…LLFA).

The protein belongs to the ATPase C chain family. As to quaternary structure, F-type ATPases have 2 components, F(1) - the catalytic core - and F(0) - the membrane proton channel. F(1) has five subunits: alpha(3), beta(3), gamma(1), delta(1), epsilon(1). F(0) has four main subunits: a(1), b(1), b'(1) and c(10-14). The alpha and beta chains form an alternating ring which encloses part of the gamma chain. F(1) is attached to F(0) by a central stalk formed by the gamma and epsilon chains, while a peripheral stalk is formed by the delta, b and b' chains.

The protein localises to the plastid. The protein resides in the chloroplast thylakoid membrane. Functionally, f(1)F(0) ATP synthase produces ATP from ADP in the presence of a proton or sodium gradient. F-type ATPases consist of two structural domains, F(1) containing the extramembraneous catalytic core and F(0) containing the membrane proton channel, linked together by a central stalk and a peripheral stalk. During catalysis, ATP synthesis in the catalytic domain of F(1) is coupled via a rotary mechanism of the central stalk subunits to proton translocation. Its function is as follows. Key component of the F(0) channel; it plays a direct role in translocation across the membrane. A homomeric c-ring of between 10-14 subunits forms the central stalk rotor element with the F(1) delta and epsilon subunits. The sequence is that of ATP synthase subunit c, chloroplastic from Thalassiosira pseudonana (Marine diatom).